A 431-amino-acid chain; its full sequence is ATP-dependent RNA helicase DBP8 (431 aa).

The Q motif motif lies at 2-30; it reads ADFKSLGLSKWLTESLRAMKITQPTAIQK. Positions 33–209 constitute a Helicase ATP-binding domain; that stretch reads IPKILEGRDC…NAPVQKGKPP (177 aa). 46-53 lines the ATP pocket; that stretch reads AKTGSGKT. The DEAD box signature appears at 155–158; that stretch reads DEAD. Residues 242 to 389 form the Helicase C-terminal domain; that stretch reads YLYQLLTCEE…TNKVHDTAVI (148 aa). The segment at 404 to 431 is disordered; sequence LMAMQKENFGERKRQQKKKQNDGKSLRS. A compositionally biased stretch (basic and acidic residues) spans 411–431; sequence NFGERKRQQKKKQNDGKSLRS.

The protein belongs to the DEAD box helicase family. DDX49/DBP8 subfamily. Interacts with ESF2.

The protein resides in the nucleus. Its subcellular location is the nucleolus. The catalysed reaction is ATP + H2O = ADP + phosphate + H(+). Its function is as follows. ATP-binding RNA helicase involved in 40S ribosomal subunit biogenesis and is required for the normal formation of 18S rRNAs through pre-rRNA processing at A0, A1 and A2 sites. Required for vegetative growth. The polypeptide is ATP-dependent RNA helicase DBP8 (DBP8) (Saccharomyces cerevisiae (strain YJM789) (Baker's yeast)).